Here is a 772-residue protein sequence, read N- to C-terminus: Potassium transporter 24 (772 aa).

Residues 1-23 (MDVEGGGAAARRKGGWWWWREEA) are Cytoplasmic-facing. Residues 24–44 (VLAYQSLGVVYGEVAAAPLYV) form a helical membrane-spanning segment. Residues 45–66 (YRSAFAGGDIEHSAGNEEIYGA) are Extracellular-facing. The chain crosses the membrane as a helical span at residues 67-87 (LSLVFWTLTLVPLAKYVLLVL). Residues 88–150 (RADDAGEGGT…ALERHRVLQR (63 aa)) are Cytoplasmic-facing. The chain crosses the membrane as a helical span at residues 151 to 171 (LLLLLALLGTCMVIGDGVLTP). Residues 172-192 (AVSVFSAVSGLELSMDKDQHK) are Extracellular-facing. Residues 193–213 (YILLPITCVILVCLFALQHYG) traverse the membrane as a helical segment. The Cytoplasmic segment spans residues 214–216 (THR). Residues 217-237 (VGFLFAPIVCLWLLCISIIGV) traverse the membrane as a helical segment. Topologically, residues 238-265 (YNIIHWNPHVYQALSPYYMYKFLRKTQT) are extracellular. A helical transmembrane segment spans residues 266–286 (GGWMSLGGILLCVTGSEAMYA). The Cytoplasmic portion of the chain corresponds to 287–298 (DLGHFTQNSIKM). The helical transmembrane segment at 299–319 (AFTLLVYPALVLAYMGQAAYI) threads the bilayer. Residues 320-344 (SRHHNFEDGSHIGFYVSVPEKIRWP) are Extracellular-facing. The helical transmembrane segment at 345–365 (VLGIAILASVVGSQAIITGTF) threads the bilayer. Residues 366-392 (SIIKQCSSLNCFPRVKIVHTSSTVHGQ) are Cytoplasmic-facing. A helical transmembrane segment spans residues 393–413 (IYIPEINWILMILCLSVTIGF). Residues 414 to 423 (RDTKHLTNAQ) are Extracellular-facing. A helical transmembrane segment spans residues 424–444 (GLAVITVMLVTTCLMSLVILL). Over 445-449 (CWNKS) the chain is Cytoplasmic. A helical transmembrane segment spans residues 450–470 (IVYALSFLLFFGAIEVIYFAA). Residues 471–477 (SLVKFHE) lie on the Extracellular side of the membrane. A helical membrane pass occupies residues 478-498 (GAWVPVTLSFIFMMVMCVWHY). Over 499–772 (GTKKKYEFDV…TVEVGMICLV (274 aa)) the chain is Cytoplasmic. Residues 656–684 (EEGEFDGSDSTGSSAHKEINPNTTAPKPK) form a disordered region.

It belongs to the HAK/KUP transporter (TC 2.A.72.3) family.

The protein resides in the membrane. In terms of biological role, high-affinity potassium transporter. In Oryza sativa subsp. japonica (Rice), this protein is Potassium transporter 24 (HAK24).